The primary structure comprises 29 residues: Cytochrome b6-f complex subunit 8 (29 aa).

The chain crosses the membrane as a helical span at residues 3–23 (IISIGWVSLMVVFTFSISLVV).

This sequence belongs to the PetN family. In terms of assembly, the 4 large subunits of the cytochrome b6-f complex are cytochrome b6, subunit IV (17 kDa polypeptide, PetD), cytochrome f and the Rieske protein, while the 4 small subunits are PetG, PetL, PetM and PetN. The complex functions as a dimer.

The protein localises to the plastid. It localises to the chloroplast thylakoid membrane. In terms of biological role, component of the cytochrome b6-f complex, which mediates electron transfer between photosystem II (PSII) and photosystem I (PSI), cyclic electron flow around PSI, and state transitions. In Staurastrum punctulatum (Green alga), this protein is Cytochrome b6-f complex subunit 8.